The following is a 208-amino-acid chain: Histone H1t (208 aa).

The span at 1-12 (MSETAPAASSTL) shows a compositional bias: polar residues. The tract at residues 1 to 39 (MSETAPAASSTLVPAPVEKPSSKRRGKKPGLAPARKPRG) is disordered. Position 9 is a phosphoserine (S9). One can recognise an H15 domain in the interval 38–111 (RGFSVSKLIP…GASGSFKLSK (74 aa)). R56 is modified (citrulline). Residues 95-208 (LVQTKGTGAS…TDLRKAAGRK (114 aa)) form a disordered region. Residues 121 to 134 (KGKKSASAKAKKMG) show a composition bias toward basic residues. S141 carries the post-translational modification Phosphoserine. A compositionally biased stretch (basic residues) spans 143-154 (KSSKTKAVKKPK). Position 156 is a phosphothreonine (T156). A phosphoserine mark is found at S163 and S178. The span at 199–208 (TDLRKAAGRK) shows a compositional bias: basic and acidic residues.

Belongs to the histone H1/H5 family. Post-translationally, phosphorylated in early spermatids. In terms of processing, citrullination at Arg-56 (H1R54ci) by PADI4 takes place within the DNA-binding site of H1 and results in its displacement from chromatin and global chromatin decondensation, thereby promoting pluripotency and stem cell maintenance. Testis-specific.

It localises to the nucleus. The protein localises to the chromosome. Its function is as follows. Testis-specific histone H1 that forms less compacted chromatin compared to other H1 histone subtypes. Formation of more relaxed chromatin may be required to promote chromatin architecture required for proper chromosome regulation during meiosis, such as homologous recombination. Histones H1 act as linkers that bind to nucleosomes and compact polynucleosomes into a higher-order chromatin configuration. This chain is Histone H1t, found in Mus musculus (Mouse).